Consider the following 637-residue polypeptide: Mitochondrial Rho GTPase 1 (637 aa).

Residues 1 to 613 are Cytoplasmic-facing; it reads MSDGETLADV…LRRVFYLSDS (613 aa). Residues 7 to 184 form the Miro 1 domain; that stretch reads LADVRIVLIG…FYYAQKAVIY (178 aa). Residues 28–35, 74–78, and 135–138 contribute to the GTP site; these read SLLEDEWV, ISEMR, and LPSG. 2 EF-hand domains span residues 200–235 and 320–355; these read RAKKALIRVFKICDRDNDGYLSDTELNDFQKLCFGI and EGVQFVSALFEKYDEDKDGCLSPSELQNLFSVCSAP. Ca(2+) is bound by residues aspartate 213, aspartate 215, aspartate 217, tyrosine 219, glutamate 224, aspartate 333, aspartate 335, aspartate 337, cysteine 339, and glutamate 344. Residues 436–601 form the Miro 2 domain; the sequence is RKVFQCLVVG…FEQLAMMAVY (166 aa). GTP contacts are provided by residues 445–452, 482–486, and 549–552; these read GAKDAGKT, KVKEE, and TKVE. The chain crosses the membrane as a helical; Anchor for type IV membrane protein span at residues 614–634; the sequence is NLLSKITFGAAIVALAGFLVL. The Mitochondrial intermembrane segment spans residues 635–637; that stretch reads KNL.

The protein belongs to the mitochondrial Rho GTPase family.

The protein resides in the mitochondrion outer membrane. Mitochondrial GTPase involved in mitochondrial trafficking. Probably involved in control of anterograde transport of mitochondria and their subcellular distribution. This chain is Mitochondrial Rho GTPase 1, found in Caenorhabditis briggsae.